Here is a 449-residue protein sequence, read N- to C-terminus: Clusterin (449 aa).

The N-terminal stretch at 1-21 (MKTLLLLVGLLLTLENGQVLG) is a signal peptide. Residues 77-80 (KKKK) carry the Nuclear localization signal motif. N-linked (GlcNAc...) asparagine glycans are attached at residues N85 and N102. Cystine bridges form between C101–C313, C112–C305, C115–C302, C120–C295, and C128–C285. A Phosphoserine modification is found at S132. N-linked (GlcNAc...) asparagine glycosylation is found at N144, N291, N328, N354, and N374. A Phosphoserine modification is found at S396. Positions 443 to 447 (RQKNR) match the Nuclear localization signal motif.

This sequence belongs to the clusterin family. In terms of assembly, antiparallel disulfide-linked heterodimer of an alpha chain and a beta chain. Self-associates and forms higher oligomers. Interacts with a broad range of misfolded proteins, including APP, APOC2 and LYZ. Slightly acidic pH promotes interaction with misfolded proteins. Forms high-molecular weight oligomers upon interaction with misfolded proteins. Interacts with APOA1, LRP2, CLUAP1 and PON1. Interacts with the complement membrane attack complex. Interacts (via alpha chain) with XRCC6. Interacts with SYVN1, COMMD1, BTRC, CUL1 and with ubiquitin and SCF (SKP1-CUL1-F-box protein) E3 ubiquitin-protein ligase complexes. Interacts (via alpha chain) with BAX in stressed cells, where BAX undergoes a conformation change leading to association with the mitochondrial membrane. Does not interact with BAX in unstressed cells. Found in a complex with LTF, CLU, EPPIN and SEMG1. Interacts (immaturely glycosylated pre-secreted form) with HSPA5; this interaction promotes CLU stability and facilitates stress-induced CLU retrotranslocation from the secretory pathway to the mitochondria, thereby reducing stress-induced apoptosis by stabilizing mitochondrial membrane integrity. Interacts with BCL2L1; this interaction releases and activates BAX and promotes cell death. Interacts with TGFBR2 and ACVR1. Interacts (secreted form) with STMN3; this interaction may act as an important modulator during neuronal differentiation. Interacts with VLDLR and LRP8. In terms of processing, proteolytically cleaved on its way through the secretory system, probably within the Golgi lumen. Proteolytic cleavage is not necessary for its chaperone activity. All non-secreted forms are not proteolytically cleaved. Chaperone activity of uncleaved forms is dependent on a non-reducing environment. Post-translationally, polyubiquitinated, leading to proteasomal degradation. Under cellular stress, the intracellular level of cleaved form is reduced due to proteasomal degradation. Heavily N-glycosylated. About 30% of the protein mass is comprised of complex N-linked carbohydrate. Endoplasmic reticulum (ER) stress induces changes in glycosylation status and increases level of hypoglycosylated forms. Core carbohydrates are essential for chaperone activity. Non-secreted forms are hypoglycosylated or unglycosylated.

Its subcellular location is the secreted. The protein localises to the nucleus. The protein resides in the cytoplasm. It is found in the mitochondrion membrane. It localises to the cytosol. Its subcellular location is the microsome. The protein localises to the endoplasmic reticulum. The protein resides in the mitochondrion. It is found in the perinuclear region. It localises to the cytoplasmic vesicle. Its subcellular location is the secretory vesicle. The protein localises to the chromaffin granule. Its function is as follows. Functions as extracellular chaperone that prevents aggregation of non native proteins. Prevents stress-induced aggregation of blood plasma proteins. Inhibits formation of amyloid fibrils by APP, APOC2, B2M, CALCA, CSN3, SNCA and aggregation-prone LYZ variants (in vitro). Does not require ATP. Maintains partially unfolded proteins in a state appropriate for subsequent refolding by other chaperones, such as HSPA8/HSC70. Does not refold proteins by itself. Binding to cell surface receptors triggers internalization of the chaperone-client complex and subsequent lysosomal or proteasomal degradation. When secreted, protects cells against apoptosis and against cytolysis by complement: inhibits assembly of the complement membrane attack complex (MAC) by preventing polymerization of C9 pore component of the MAC complex. Intracellular forms interact with ubiquitin and SCF (SKP1-CUL1-F-box protein) E3 ubiquitin-protein ligase complexes and promote the ubiquitination and subsequent proteasomal degradation of target proteins. Promotes proteasomal degradation of COMMD1 and IKBKB. Modulates NF-kappa-B transcriptional activity. Following stress, promotes apoptosis. Inhibits apoptosis when associated with the mitochondrial membrane by interference with BAX-dependent release of cytochrome c into the cytoplasm. Plays a role in the regulation of cell proliferation. An intracellular form suppresses stress-induced apoptosis by stabilizing mitochondrial membrane integrity through interaction with HSPA5. Secreted form does not affect caspase or BAX-mediated intrinsic apoptosis and TNF-induced NF-kappa-B-activity. Secreted form act as an important modulator during neuronal differentiation through interaction with STMN3. Plays a role in the clearance of immune complexes that arise during cell injury. This is Clusterin (CLU) from Equus caballus (Horse).